We begin with the raw amino-acid sequence, 526 residues long: Nucleobase-ascorbate transporter 4 (526 aa).

Helical transmembrane passes span 42 to 62, 69 to 89, 91 to 111, 131 to 151, 157 to 177, 186 to 206, 217 to 237, 282 to 302, 359 to 381, 388 to 410, 420 to 440, and 457 to 477; these read IVML…MGGG, VINT…LFGS, LPVV…ITFS, IQGA…FGLW, FLSP…LLAF, IEIG…LPHL, FAVL…TAAG, AFAM…SFIA, RVVQ…GAVL, IFAA…LLQF, FILG…TEYL, and VIMQ…AFLL.

Belongs to the nucleobase:cation symporter-2 (NCS2) (TC 2.A.40) family. Highly expressed in the root central cylinder. Expressed in the filaments and stigmatic papillae of pollinated flowers and developing siliques.

Its subcellular location is the membrane. This is Nucleobase-ascorbate transporter 4 (NAT4) from Arabidopsis thaliana (Mouse-ear cress).